Here is a 371-residue protein sequence, read N- to C-terminus: Neutral protease 2 homolog MGYG_03465 (371 aa).

An N-terminal signal peptide occupies residues 1 to 19 (MQFVAVLAALGALVAPAAA). Positions 20-188 (YPHAPMNETL…SIHARALEKR (169 aa)) are excised as a propeptide. 2 disulfides stabilise this stretch: C196-C267 and C274-C292. Residue H316 coordinates Zn(2+). Residue E317 is part of the active site. H320 and D331 together coordinate Zn(2+).

Belongs to the peptidase M35 family. Zn(2+) serves as cofactor.

The protein resides in the secreted. It carries out the reaction Preferential cleavage of bonds with hydrophobic residues in P1'. Also 3-Asn-|-Gln-4 and 8-Gly-|-Ser-9 bonds in insulin B chain.. Secreted metalloproteinase that allows assimilation of proteinaceous substrates. Shows high activities on basic nuclear substrates such as histone and protamine. May be involved in virulence. The polypeptide is Neutral protease 2 homolog MGYG_03465 (Arthroderma gypseum (strain ATCC MYA-4604 / CBS 118893) (Microsporum gypseum)).